The chain runs to 344 residues: Aurora kinase B (344 aa).

T35 is modified (phosphothreonine). Phosphoserine is present on S62. T64 carries the post-translational modification Phosphothreonine. The Protein kinase domain occupies F77–V327. ATP contacts are provided by residues L83–V91 and K106. D200 serves as the catalytic Proton acceptor. K215 is subject to N6-acetyllysine. S227 is modified (phosphoserine). At T232 the chain carries Phosphothreonine; by autocatalysis.

The protein belongs to the protein kinase superfamily. Ser/Thr protein kinase family. Aurora subfamily. Component of the chromosomal passenger complex (CPC) composed of at least BIRC5/survivin, CDCA8/borealin, INCENP, AURKB or AURKC; predominantly independent AURKB- and AURKC-containing complexes exist. Associates with RACGAP1 during M phase. Interacts with SPDYC; this interaction may be required for proper localization of active, Thr-232-phosphorylated AURKB form during prometaphase and metaphase. Interacts with p53/TP53. Interacts (via the middle kinase domain) with NOC2L (via the N- and C-terminus domains). Interacts with CDCA1. Interacts with EVI5. Interacts with JTB. Interacts with NDC80. Interacts with PSMA3. Interacts with RNF2/RING1B. Interacts with SEPTIN1. Interacts with SIRT2. Interacts with TACC1. Interacts with TTC28. In terms of processing, the phosphorylation of Thr-232 requires the binding to INCENP and occurs by means of an autophosphorylation mechanism. Thr-232 phosphorylation is indispensable for the AURKB kinase activity. Post-translationally, acetylated at Lys-215 by KAT5 at kinetochores, increasing AURKB activity and promoting accurate chromosome segregation in mitosis. Ubiquitinated by different BCR (BTB-CUL3-RBX1) E3 ubiquitin ligase complexes. Ubiquitinated by the BCR(KLHL9-KLHL13) E3 ubiquitin ligase complex, ubiquitination leads to removal from mitotic chromosomes and is required for cytokinesis. During anaphase, the BCR(KLHL21) E3 ubiquitin ligase complex recruits the CPC complex from chromosomes to the spindle midzone and mediates the ubiquitination of AURKB. Ubiquitination of AURKB by BCR(KLHL21) E3 ubiquitin ligase complex may not lead to its degradation by the proteasome. Deubiquitinated by USP35; inhibiting CDH1-mediated degradation of AURKB.

The protein resides in the nucleus. It is found in the chromosome. The protein localises to the centromere. Its subcellular location is the kinetochore. It localises to the cytoplasm. The protein resides in the cytoskeleton. It is found in the spindle. The protein localises to the midbody. It catalyses the reaction L-seryl-[protein] + ATP = O-phospho-L-seryl-[protein] + ADP + H(+). The catalysed reaction is L-threonyl-[protein] + ATP = O-phospho-L-threonyl-[protein] + ADP + H(+). Its activity is regulated as follows. Activity is greatly increased when AURKB is within the CPC complex. In particular, AURKB-phosphorylated INCENP acts as an activator of AURKB. Positive feedback between HASPIN and AURKB contributes to CPC localization. Serine/threonine-protein kinase component of the chromosomal passenger complex (CPC), a complex that acts as a key regulator of mitosis. The CPC complex has essential functions at the centromere in ensuring correct chromosome alignment and segregation and is required for chromatin-induced microtubule stabilization and spindle assembly. Involved in the bipolar attachment of spindle microtubules to kinetochores and is a key regulator for the onset of cytokinesis during mitosis. Required for central/midzone spindle assembly and cleavage furrow formation. Key component of the cytokinesis checkpoint, a process required to delay abscission to prevent both premature resolution of intercellular chromosome bridges and accumulation of DNA damage: phosphorylates CHMP4C, leading to retain abscission-competent VPS4 (VPS4A and/or VPS4B) at the midbody ring until abscission checkpoint signaling is terminated at late cytokinesis. AURKB phosphorylates the CPC complex subunits BIRC5/survivin, CDCA8/borealin and INCENP. Phosphorylation of INCENP leads to increased AURKB activity. Other known AURKB substrates involved in centromeric functions and mitosis are CENPA, DES/desmin, GPAF, KIF2C, NSUN2, RACGAP1, SEPTIN1, VIM/vimentin, HASPIN, and histone H3. A positive feedback loop involving HASPIN and AURKB contributes to localization of CPC to centromeres. Phosphorylation of VIM controls vimentin filament segregation in cytokinetic process, whereas histone H3 is phosphorylated at 'Ser-10' and 'Ser-28' during mitosis (H3S10ph and H3S28ph, respectively). AURKB is also required for kinetochore localization of BUB1 and SGO1. Phosphorylation of p53/TP53 negatively regulates its transcriptional activity. Key regulator of active promoters in resting B- and T-lymphocytes: acts by mediating phosphorylation of H3S28ph at active promoters in resting B-cells, inhibiting RNF2/RING1B-mediated ubiquitination of histone H2A and enhancing binding and activity of the USP16 deubiquitinase at transcribed genes. Acts as an inhibitor of CGAS during mitosis: catalyzes phosphorylation of the N-terminus of CGAS during the G2-M transition, blocking CGAS liquid phase separation and activation, and thereby preventing CGAS-induced autoimmunity. Phosphorylates KRT5 during anaphase and telophase. Phosphorylates ATXN10 which promotes phosphorylation of ATXN10 by PLK1 and may play a role in the regulation of cytokinesis and stimulating the proteasomal degradation of ATXN10. In Sus scrofa (Pig), this protein is Aurora kinase B (AURKB).